Reading from the N-terminus, the 260-residue chain is Adenosylcobinamide-GDP ribazoletransferase (260 aa).

Transmembrane regions (helical) follow at residues 31–51, 55–75, 111–131, 140–160, 177–197, 202–222, and 234–254; these read IIFF…LVNI, IFSS…VRGI, VIGV…FAFV, FLIF…LMYY, ISSW…VYFT, FIFL…LKKF, and HLGA…LLGE.

It belongs to the CobS family. It depends on Mg(2+) as a cofactor.

Its subcellular location is the cell inner membrane. The enzyme catalyses alpha-ribazole + adenosylcob(III)inamide-GDP = adenosylcob(III)alamin + GMP + H(+). It catalyses the reaction alpha-ribazole 5'-phosphate + adenosylcob(III)inamide-GDP = adenosylcob(III)alamin 5'-phosphate + GMP + H(+). It functions in the pathway cofactor biosynthesis; adenosylcobalamin biosynthesis; adenosylcobalamin from cob(II)yrinate a,c-diamide: step 7/7. Its function is as follows. Joins adenosylcobinamide-GDP and alpha-ribazole to generate adenosylcobalamin (Ado-cobalamin). Also synthesizes adenosylcobalamin 5'-phosphate from adenosylcobinamide-GDP and alpha-ribazole 5'-phosphate. The chain is Adenosylcobinamide-GDP ribazoletransferase from Thermodesulfovibrio yellowstonii (strain ATCC 51303 / DSM 11347 / YP87).